The primary structure comprises 261 residues: Imidazole glycerol phosphate synthase subunit HisF (261 aa).

Active-site residues include Asp16 and Asp135.

The protein belongs to the HisA/HisF family. In terms of assembly, heterodimer of HisH and HisF.

The protein localises to the cytoplasm. It carries out the reaction 5-[(5-phospho-1-deoxy-D-ribulos-1-ylimino)methylamino]-1-(5-phospho-beta-D-ribosyl)imidazole-4-carboxamide + L-glutamine = D-erythro-1-(imidazol-4-yl)glycerol 3-phosphate + 5-amino-1-(5-phospho-beta-D-ribosyl)imidazole-4-carboxamide + L-glutamate + H(+). The protein operates within amino-acid biosynthesis; L-histidine biosynthesis; L-histidine from 5-phospho-alpha-D-ribose 1-diphosphate: step 5/9. Functionally, IGPS catalyzes the conversion of PRFAR and glutamine to IGP, AICAR and glutamate. The HisF subunit catalyzes the cyclization activity that produces IGP and AICAR from PRFAR using the ammonia provided by the HisH subunit. The protein is Imidazole glycerol phosphate synthase subunit HisF of Mycolicibacterium gilvum (strain PYR-GCK) (Mycobacterium gilvum (strain PYR-GCK)).